Reading from the N-terminus, the 439-residue chain is DNA 3'-5' translocase XPB2 (439 aa).

The segment at 1 to 54 (MVYLRYFKGLILSDAYAPGLKWSDELKAYSALAFKYRDVRKYFLEKEIEVEENV) is DRD domain. The 145-residue stretch at 77–221 (VKAWLKEKRG…LYPILVGPIV (145 aa)) folds into the Helicase ATP-binding domain. ATP contacts are provided by residues 90–97 (LPTGAGKT) and arginine 127. Residues 174–177 (DEVH) carry the DEAH box motif. Residues 205-207 (RDD) carry the RED motif motif. Positions 227 to 234 (EELAGKYI) are flexible hinge region. The interval 248 to 307 (NEEKKRYDGLRKKLKDFLSSRGLKLQNLDDFHRLVKLAAKDKEAREALLAWHESLNIAVN) is thM region. The Helicase C-terminal domain maps to 311–439 (KIEKLREILQ…DYRLSRRRRE (129 aa)).

The protein belongs to the helicase family. RAD25/XPB subfamily. Forms a heterodimer with Bax1.

It catalyses the reaction Couples ATP hydrolysis with the unwinding of duplex DNA by translocating in the 3'-5' direction.. It carries out the reaction ATP + H2O = ADP + phosphate + H(+). In terms of biological role, ATP-dependent DNA translocase which moves along double-stranded DNA (dsDNA) in a 3'-5' direction, unwinding the DNA. The ThM domain grips the resulting 3'-ssDNA tail and functions as a wedge (particularly Phe-278), breaking dsDNA base pairs, probably using the energy from ATP hydrolysis to move along dsDNA. A DNA-dependent ATPase; double-stranded DNA (dsDNA) stimulates the activity more than single-stranded DNA (ssDNA), while Bax1 stimulates ATPase more. In an in vitro assay had no detectable helicase activity. Binds ssDNA better than dsDNA. Has very low ATPase activity that is stimulated by Bax1; dsDNA, Y-form DNA and a DNA substrate with a 6 base pair (bp) bubble in the center stimulate the XPB2-Bax1 ATPase activity about 10- 20-fold more than the absence of DNA. In an XPB2-Bax1-bubble DNA crystal (12 bp of dsDNA, a 6 base bubble and 6 bp of dsDNA) the short 6 bp arm is unwound. The 2 helicase and the ThM domains of XPB2 with the NTD and CRD domains of Bax1 encircle the DNA, forming a tunnel where the 12 bp dsDNA and the ds-ssDNA junction are located. The ThM domain is wedged between the ssDNA tails, with the 5' ssDNA contacting Bax1 and the 3' ssDNA in a channel in XPB2. Bax1 increases the affinity of XPB2 for forked DNA. The sequence is that of DNA 3'-5' translocase XPB2 from Sulfurisphaera tokodaii (strain DSM 16993 / JCM 10545 / NBRC 100140 / 7) (Sulfolobus tokodaii).